The following is a 260-amino-acid chain: Snake venom serine protease homolog (260 aa).

The signal sequence occupies residues 1-18 (MVLIRVLANLLILQLSYA). The propeptide occupies 19–24 (QKASEL). The Peptidase S1 domain maps to 25–251 (IIGGDECNIN…YTEWIRSIIA (227 aa)). Cystine bridges form between Cys-31-Cys-165, Cys-52-Cys-68, Cys-100-Cys-258, Cys-144-Cys-212, Cys-176-Cys-191, and Cys-202-Cys-227. The N-linked (GlcNAc...) asparagine glycan is linked to Asn-83.

It belongs to the peptidase S1 family. Snake venom subfamily. As to expression, expressed by the venom gland.

It is found in the secreted. Its function is as follows. Snake venom serine protease homolog that may act in the hemostasis system of the prey. This is Snake venom serine protease homolog from Bothrops jararacussu (Jararacussu).